The sequence spans 606 residues: KH domain-containing protein At4g18375 (606 aa).

Over residues 1–10 (MVERKKRKQI) the composition is skewed to basic residues. The segment at 1-26 (MVERKKRKQIQRNNSESNRNQKRRIS) is disordered. KH domains are found at residues 35–99 (LVVY…IGFT), 138–210 (NKEC…LFAV), 311–380 (ELVF…VEAV), 394–455 (NVKM…LIQI), and 535–599 (SSAL…ENLV).

It is found in the nucleus. This chain is KH domain-containing protein At4g18375, found in Arabidopsis thaliana (Mouse-ear cress).